The chain runs to 85 residues: MSKQPISNVRSIQANINIPMGAFRPGAGQPPRRKESTPGTAEGAPATPEEKKPVPGMKKFPGPVVNLSEIQNVKSELKYVPKGEQ.

The interval 19-63 (PMGAFRPGAGQPPRRKESTPGTAEGAPATPEEKKPVPGMKKFPGP) is disordered. Position 36 is a phosphoserine (serine 36). Threonine 47 carries the post-translational modification Phosphothreonine.

This sequence belongs to the SMPX family.

Its function is as follows. Plays a role in the regulatory network through which muscle cells coordinate their structural and functional states during growth, adaptation, and repair. This is Small muscular protein (Smpx) from Rattus norvegicus (Rat).